A 444-amino-acid chain; its full sequence is Viral protein kinase (444 aa).

Residues 1 to 25 (MRWKRMERRPPLTPLRRSRTQSSGG) form a disordered region. Residues 90–98 (LGRGAFGII) and Lys-108 contribute to the ATP site. Asp-201 serves as the catalytic Proton acceptor.

In terms of assembly, interacts with protein K-bZIP/K8. Interacts with host beta-catenin/CTNNB1. AUtophosphorylated.

Its subcellular location is the host nucleus. It carries out the reaction L-seryl-[protein] + ATP = O-phospho-L-seryl-[protein] + ADP + H(+). It catalyses the reaction L-threonyl-[protein] + ATP = O-phospho-L-threonyl-[protein] + ADP + H(+). In terms of biological role, serine/threonine protein kinase that plays a role in viral gene expression, viral DNA replication and encapsidation, and nuclear egress of virions. Regulates host transcriptional activity through interactions with RNA helicase and c-Jun N-terminal kinase (JNK) and viral transcriptional activity through interactions with the viral protein K-bZIP/K8. Induces host chromosome condensation and phosphorylation of histone H3. Phosphorylates the DNA polymerase processivity factor hence modulating its processivity function. Inhibits the host Wnt signaling pathway via direct interactions with beta-catenin/CTNNB1 while the kinase activity of vPK is not required for this inhibitory activity. Also phosphorylates host SAMHD1 and thereby counteracts its antiviral effect by reducing its dNTP hydrolase activity. The sequence is that of Viral protein kinase (vPK) from Human herpesvirus 8 type P (isolate GK18) (HHV-8).